The chain runs to 680 residues: 1-deoxy-D-xylulose-5-phosphate synthase (680 aa).

Over residues 1–17 (MQQSPHSPQSQSLSASA) the composition is skewed to low complexity. A disordered region spans residues 1 to 20 (MQQSPHSPQSQSLSASAVDS). Thiamine diphosphate contacts are provided by residues H113 and 154–156 (GHS). A Mg(2+)-binding site is contributed by D185. Thiamine diphosphate contacts are provided by residues 186 to 187 (GA), N214, F323, and E408. Residue N214 coordinates Mg(2+).

This sequence belongs to the transketolase family. DXPS subfamily. Homodimer. It depends on Mg(2+) as a cofactor. Requires thiamine diphosphate as cofactor.

The catalysed reaction is D-glyceraldehyde 3-phosphate + pyruvate + H(+) = 1-deoxy-D-xylulose 5-phosphate + CO2. The protein operates within metabolic intermediate biosynthesis; 1-deoxy-D-xylulose 5-phosphate biosynthesis; 1-deoxy-D-xylulose 5-phosphate from D-glyceraldehyde 3-phosphate and pyruvate: step 1/1. Catalyzes the acyloin condensation reaction between C atoms 2 and 3 of pyruvate and glyceraldehyde 3-phosphate to yield 1-deoxy-D-xylulose-5-phosphate (DXP). This is 1-deoxy-D-xylulose-5-phosphate synthase from Psychrobacter cryohalolentis (strain ATCC BAA-1226 / DSM 17306 / VKM B-2378 / K5).